Reading from the N-terminus, the 193-residue chain is Thymidylate kinase (193 aa).

ATP is bound at residue glycine 7 to serine 14.

It belongs to the thymidylate kinase family.

It catalyses the reaction dTMP + ATP = dTDP + ADP. In terms of biological role, phosphorylation of dTMP to form dTDP in both de novo and salvage pathways of dTTP synthesis. The polypeptide is Thymidylate kinase (Coprothermobacter proteolyticus (strain ATCC 35245 / DSM 5265 / OCM 4 / BT)).